The following is a 184-amino-acid chain: Cytidylate kinase (184 aa).

Residue G8 to T16 participates in ATP binding.

This sequence belongs to the cytidylate kinase family. Type 2 subfamily.

It localises to the cytoplasm. The catalysed reaction is CMP + ATP = CDP + ADP. The enzyme catalyses dCMP + ATP = dCDP + ADP. This chain is Cytidylate kinase, found in Pyrobaculum neutrophilum (strain DSM 2338 / JCM 9278 / NBRC 100436 / V24Sta) (Thermoproteus neutrophilus).